The chain runs to 477 residues: Serine/threonine protein phosphatase 2A 55 kDa regulatory subunit B' delta isoform (477 aa).

It belongs to the phosphatase 2A regulatory subunit B56 family. PP2A consists of a common heteromeric enzyme, composed of a catalytic subunit (subunits C), a constant regulatory subunit (subunit A), and a variety of regulatory subunits such as subunits B (the R2/B/PR55/B55, R3/B''/PR72/PR130/PR59 and R5/B'/B56 families). Interacts with SRK2E/OST1. As to expression, expressed ubiquitously.

It localises to the cytoplasm. The B regulatory subunit may modulate substrate selectivity and catalytic activity, and may also direct the localization of the catalytic enzyme to a particular subcellular compartment. The sequence is that of Serine/threonine protein phosphatase 2A 55 kDa regulatory subunit B' delta isoform (B'DELTA) from Arabidopsis thaliana (Mouse-ear cress).